A 102-amino-acid chain; its full sequence is Phosphoribosyl-ATP pyrophosphatase (102 aa).

Belongs to the PRA-PH family.

It localises to the cytoplasm. It catalyses the reaction 1-(5-phospho-beta-D-ribosyl)-ATP + H2O = 1-(5-phospho-beta-D-ribosyl)-5'-AMP + diphosphate + H(+). It functions in the pathway amino-acid biosynthesis; L-histidine biosynthesis; L-histidine from 5-phospho-alpha-D-ribose 1-diphosphate: step 2/9. This Dinoroseobacter shibae (strain DSM 16493 / NCIMB 14021 / DFL 12) protein is Phosphoribosyl-ATP pyrophosphatase.